A 467-amino-acid polypeptide reads, in one-letter code: Asparagine--tRNA ligase (467 aa).

Belongs to the class-II aminoacyl-tRNA synthetase family. As to quaternary structure, homodimer.

The protein localises to the cytoplasm. It carries out the reaction tRNA(Asn) + L-asparagine + ATP = L-asparaginyl-tRNA(Asn) + AMP + diphosphate + H(+). This chain is Asparagine--tRNA ligase, found in Histophilus somni (strain 129Pt) (Haemophilus somnus).